A 196-amino-acid chain; its full sequence is Large ribosomal subunit protein uL5 (196 aa).

The protein belongs to the universal ribosomal protein uL5 family. As to quaternary structure, part of the 50S ribosomal subunit; part of the 5S rRNA/L5/L18/L25 subcomplex. Contacts the 5S rRNA and the P site tRNA. Forms a bridge to the 30S subunit in the 70S ribosome.

In terms of biological role, this is one of the proteins that bind and probably mediate the attachment of the 5S RNA into the large ribosomal subunit, where it forms part of the central protuberance. In the 70S ribosome it contacts protein S13 of the 30S subunit (bridge B1b), connecting the 2 subunits; this bridge is implicated in subunit movement. Contacts the P site tRNA; the 5S rRNA and some of its associated proteins might help stabilize positioning of ribosome-bound tRNAs. The polypeptide is Large ribosomal subunit protein uL5 (Acidothermus cellulolyticus (strain ATCC 43068 / DSM 8971 / 11B)).